The following is a 352-amino-acid chain: Carbohydrate sulfotransferase 11 (352 aa).

Over 1-16 the chain is Cytoplasmic; the sequence is MKQTILDLMRMSRICR. The chain crosses the membrane as a helical; Signal-anchor for type II membrane protein span at residues 17–37; sequence MVLATCLGSFILVIFYFQSMF. Residues 38–352 are Lumenal-facing; that stretch reads QPVMRRNPFA…YSIPSYLKLQ (315 aa). 3'-phosphoadenylyl sulfate-binding positions include 124–130 and 186–194; these read PKVACTN and REPFERLVS. 4 N-linked (GlcNAc...) asparagine glycosylation sites follow: N205, N223, N321, and N342.

It belongs to the sulfotransferase 2 family.

It localises to the golgi apparatus membrane. It carries out the reaction chondroitin beta-D-glucuronate + n 3'-phosphoadenylyl sulfate = chondroitin 4'-sulfate + n adenosine 3',5'-bisphosphate + n H(+). In terms of biological role, catalyzes the transfer of sulfate to position 4 of the N-acetylgalactosamine (GalNAc) residue of chondroitin. The polypeptide is Carbohydrate sulfotransferase 11 (chst11) (Danio rerio (Zebrafish)).